Reading from the N-terminus, the 115-residue chain is Putative septation protein SpoVG (115 aa).

The tract at residues Pro88–Ala115 is disordered. Over residues Ile91–Leu100 the composition is skewed to polar residues. Positions Ser105–Ala115 are enriched in basic and acidic residues.

The protein belongs to the SpoVG family.

Its function is as follows. Could be involved in septation. The polypeptide is Putative septation protein SpoVG (Macrococcus caseolyticus (strain JCSC5402) (Macrococcoides caseolyticum)).